Consider the following 501-residue polypeptide: Cytochrome P450 monooxygeanse terP (501 aa).

A helical membrane pass occupies residues 2 to 22 (PSLLLSLLLLQVPIICAWLLV). Cys-441 provides a ligand contact to heme.

It belongs to the cytochrome P450 family. The cofactor is heme.

The protein localises to the membrane. Its pathway is secondary metabolite biosynthesis. Functionally, cytochrome P450 monooxygeanse; part of the gene cluster that mediates the biosynthesis of terpendoles, indole-diterpene (IDT) mycotoxins including terpendole I, terpendole K, terpendole C, as well as the kinesin Eg5 inhibitor terpendole E. TerP has dual activity and is able to convert terpendole E to 13-desoxyterpendole I and paspaline to 13-desoxypaxilline. Terpendoles biosynthesis begins with the synthesis of geranylgeranyl diphosphate (GGPP) by a yet unidentified GGPP synthase. Condensation of indole-3-glycerol phosphate with GGPP by the prenyltransferase terC then forms 3-geranylgeranylindole (3-GGI), followed by epoxidation and cyclization of this intermediate (by the FAD-dependent monooxygeanse terM and the terpene cyclase terB) to form paspaline. The cytochrome monooxygenase terQ then hydroxylates paspalline at C-11 to yield terpendole E. The cytochrome monooxygenase terP converts terpendole E to 13-desoxyterpendole I, and terQ converts 13-desoxyterpendole I into terpendole I. TerF and terK are required for conversion of terpendole I to terpendole C which is further converted to terpendole K. The polypeptide is Cytochrome P450 monooxygeanse terP (Tolypocladium album (Soil fungus)).